Here is a 270-residue protein sequence, read N- to C-terminus: MSMQDHDRTEQGMTSLAVTRHLDGSSRPDWDRVAEETPVALVFNGISHAVMMATPLDLEWLAVGFALSEGIVARRAEIFDIESDFVCGGAEVRLEIAQPAFLALKDRRRSLAGRTGCGVCGIESLAMLDLSPEPIAGPAGPVSADPAAIARAAAELPAHQRLMQATGCAHAAAWCGRDGGVRMAFEDVGRHNALDKLIGWLALEGMDPADGFVFMSSRASYELARKCARTGIPLLATISAPTSLAVDIARRAGVALASFCRRTGFVEYTA.

Basic and acidic residues-rich tracts occupy residues 1-10 and 20-30; these read MSMQDHDRTE and RHLDGSSRPDW. A disordered region spans residues 1–30; the sequence is MSMQDHDRTEQGMTSLAVTRHLDGSSRPDW. Cys117 functions as the Cysteine persulfide intermediate in the catalytic mechanism.

The protein belongs to the FdhD family.

The protein resides in the cytoplasm. Required for formate dehydrogenase (FDH) activity. Acts as a sulfur carrier protein that transfers sulfur from IscS to the molybdenum cofactor prior to its insertion into FDH. In Chromobacterium violaceum (strain ATCC 12472 / DSM 30191 / JCM 1249 / CCUG 213 / NBRC 12614 / NCIMB 9131 / NCTC 9757 / MK), this protein is Sulfur carrier protein FdhD.